Reading from the N-terminus, the 324-residue chain is Reaction center protein M chain (324 aa).

The Cytoplasmic segment spans residues 2-51 (ADYQTIYTQIQARGPHITVSGEWGDNDRVGKPFYSYWLGKIGDAQIGPIY). A helical transmembrane segment spans residues 52–76 (LGASGIAAFAFGSTAILIILFNMAA). At 77–110 (EVHFDPLQFFRQFFWLGLYPPKAQYGMGIPPLHD) the chain is on the periplasmic side. Residues 111-137 (GGWWLMAGLFMTLSLGSWWIRVYSRAR) form a helical membrane-spanning segment. At 138–142 (ALGLG) the chain is on the cytoplasmic side. A helical transmembrane segment spans residues 143 to 166 (THIAWNFAAAIFFVLCIGCIHPTL). The Periplasmic segment spans residues 167–197 (VGSWSEGVPFGIWPHIDWLTAFSIRYGNFYY). H181 and H201 together coordinate (7R,8Z)-bacteriochlorophyll b. The helical transmembrane segment at 198–223 (CPWHGFSIGFAYGCGLLFAAHGATIL) threads the bilayer. H218 and E233 together coordinate Fe cation. Residues 224-259 (AVARFGGDREIEQITDRGTAVERAALFWRWTIGFNA) lie on the Cytoplasmic side of the membrane. A ubiquinone is bound at residue W251. The chain crosses the membrane as a helical span at residues 260-284 (TIESVHRWGWFFSLMVMVSASVGIL). H265 is a binding site for Fe cation. Residues 285–324 (LTGTFVDNWYLWCVKHGAAPDYPAYLPATPDPASLPGAPK) are Periplasmic-facing.

It belongs to the reaction center PufL/M/PsbA/D family. In terms of assembly, reaction center is composed of four bacteriochlorophylls, two bacteriopheophytins, two ubiquinones, one iron, and three highly hydrophobic polypeptide chains (designated L, M, and H).

It is found in the cellular chromatophore membrane. The reaction center is a membrane-bound complex that mediates the initial photochemical event in the electron transfer process of photosynthesis. The protein is Reaction center protein M chain (pufM) of Blastochloris viridis (Rhodopseudomonas viridis).